Here is a 314-residue protein sequence, read N- to C-terminus: MKTIIRYFSFVMGLMLTLPSFAKEKISIMLDWYVNPDHAAIIVAQQKGFFEKNNLEVEIIEPADPALPPKLAAAEKVDLAVSYQPQLYQQVAEGLPLVRVGSLISNPLNSVVVLKKSNLKSLADLKGKKVGYSVSGFEDGLLDTMLHSIGLSNKDVELVNVNWSLSPSLLTGQVDAVIGAFRNFELNQLALEKQEGIAFFPEQYGVPAYDELILVANKNSVTDKKTSAFLTALEQATSYLQAHPNEAWQAFVSYKPNELNTPLNQLAWKDTLPFLANKPRQLDAKRYQQMAEFMQQKGLIPKALALKEYAVEIE.

The protein belongs to the NMT1/THI5 family.

In terms of biological role, probably involved in thiamine biosynthesis. The polypeptide is Putative thiamine biosynthesis protein HI_0357 (Haemophilus influenzae (strain ATCC 51907 / DSM 11121 / KW20 / Rd)).